The sequence spans 215 residues: Adenylate kinase (215 aa).

Residue glycine 10–threonine 15 coordinates ATP. An NMP region spans residues serine 30–valine 59. AMP contacts are provided by residues threonine 31, arginine 36, glycine 57–valine 59, glycine 85–arginine 88, and glutamine 92. Residues glycine 122 to aspartate 159 form an LID region. ATP contacts are provided by residues arginine 123 and valine 132 to tyrosine 133. Residues arginine 156 and arginine 167 each contribute to the AMP site. Residue glycine 201 coordinates ATP.

This sequence belongs to the adenylate kinase family. In terms of assembly, monomer.

The protein resides in the cytoplasm. The catalysed reaction is AMP + ATP = 2 ADP. Its pathway is purine metabolism; AMP biosynthesis via salvage pathway; AMP from ADP: step 1/1. Its function is as follows. Catalyzes the reversible transfer of the terminal phosphate group between ATP and AMP. Plays an important role in cellular energy homeostasis and in adenine nucleotide metabolism. The polypeptide is Adenylate kinase (Pseudomonas fluorescens (strain ATCC BAA-477 / NRRL B-23932 / Pf-5)).